The chain runs to 379 residues: Alkanesulfonate monooxygenase (379 aa).

Belongs to the SsuD family.

The catalysed reaction is an alkanesulfonate + FMNH2 + O2 = an aldehyde + FMN + sulfite + H2O + 2 H(+). Functionally, catalyzes the desulfonation of aliphatic sulfonates. This chain is Alkanesulfonate monooxygenase, found in Pseudomonas syringae pv. syringae (strain B728a).